A 379-amino-acid chain; its full sequence is Succinyl-diaminopimelate desuccinylase (379 aa).

Zn(2+) is bound at residue His70. Asp72 is a catalytic residue. Asp103 contributes to the Zn(2+) binding site. The Proton acceptor role is filled by Glu137. Residues Glu138, Glu166, and His352 each contribute to the Zn(2+) site.

Belongs to the peptidase M20A family. DapE subfamily. Homodimer. Requires Zn(2+) as cofactor. Co(2+) is required as a cofactor.

The enzyme catalyses N-succinyl-(2S,6S)-2,6-diaminopimelate + H2O = (2S,6S)-2,6-diaminopimelate + succinate. The protein operates within amino-acid biosynthesis; L-lysine biosynthesis via DAP pathway; LL-2,6-diaminopimelate from (S)-tetrahydrodipicolinate (succinylase route): step 3/3. Its function is as follows. Catalyzes the hydrolysis of N-succinyl-L,L-diaminopimelic acid (SDAP), forming succinate and LL-2,6-diaminopimelate (DAP), an intermediate involved in the bacterial biosynthesis of lysine and meso-diaminopimelic acid, an essential component of bacterial cell walls. In Shewanella putrefaciens (strain CN-32 / ATCC BAA-453), this protein is Succinyl-diaminopimelate desuccinylase.